Consider the following 325-residue polypeptide: Acetyl-coenzyme A carboxylase carboxyl transferase subunit beta (325 aa).

A CoA carboxyltransferase N-terminal domain is found at 24-293; the sequence is LWIKCPDSGH…AEIEVVTPEP (270 aa).

This sequence belongs to the AccD/PCCB family. Acetyl-CoA carboxylase is a heterohexamer composed of biotin carboxyl carrier protein (AccB), biotin carboxylase (AccC) and two subunits each of ACCase subunit alpha (AccA) and ACCase subunit beta (AccD).

The protein localises to the cytoplasm. It catalyses the reaction N(6)-carboxybiotinyl-L-lysyl-[protein] + acetyl-CoA = N(6)-biotinyl-L-lysyl-[protein] + malonyl-CoA. Its pathway is lipid metabolism; malonyl-CoA biosynthesis; malonyl-CoA from acetyl-CoA: step 1/1. Component of the acetyl coenzyme A carboxylase (ACC) complex. Biotin carboxylase (BC) catalyzes the carboxylation of biotin on its carrier protein (BCCP) and then the CO(2) group is transferred by the transcarboxylase to acetyl-CoA to form malonyl-CoA. In Rhodopseudomonas palustris (strain BisA53), this protein is Acetyl-coenzyme A carboxylase carboxyl transferase subunit beta.